The sequence spans 92 residues: Large ribosomal subunit protein bL34m (92 aa).

The N-terminal 46 residues, 1-46 (MAFLARCFGCQACRSVALLSGRYLQSRVWMGLPDSWPLLSLQQARG), are a transit peptide targeting the mitochondrion. At Ser71 the chain carries Phosphoserine.

This sequence belongs to the bacterial ribosomal protein bL34 family. As to quaternary structure, component of the mitochondrial ribosome large subunit (39S) which comprises a 16S rRNA and about 50 distinct proteins.

The protein resides in the mitochondrion. The protein is Large ribosomal subunit protein bL34m (Mrpl34) of Mus musculus (Mouse).